Consider the following 511-residue polypeptide: 2,3-bisphosphoglycerate-independent phosphoglycerate mutase (511 aa).

Mn(2+) contacts are provided by aspartate 12 and serine 62. The Phosphoserine intermediate role is filled by serine 62. Substrate contacts are provided by residues histidine 123, arginine 153–aspartate 154, arginine 185, arginine 191, arginine 260–arginine 263, and lysine 335. Aspartate 402, histidine 406, aspartate 443, histidine 444, and histidine 462 together coordinate Mn(2+).

The protein belongs to the BPG-independent phosphoglycerate mutase family. As to quaternary structure, monomer. Requires Mn(2+) as cofactor.

The catalysed reaction is (2R)-2-phosphoglycerate = (2R)-3-phosphoglycerate. The protein operates within carbohydrate degradation; glycolysis; pyruvate from D-glyceraldehyde 3-phosphate: step 3/5. In terms of biological role, catalyzes the interconversion of 2-phosphoglycerate and 3-phosphoglycerate. The sequence is that of 2,3-bisphosphoglycerate-independent phosphoglycerate mutase from Acetivibrio thermocellus (strain ATCC 27405 / DSM 1237 / JCM 9322 / NBRC 103400 / NCIMB 10682 / NRRL B-4536 / VPI 7372) (Clostridium thermocellum).